The chain runs to 510 residues: GMP synthase [glutamine-hydrolyzing] (510 aa).

The 191-residue stretch at 5–195 (PILVVNFGSQ…IYGVCKAEKN (191 aa)) folds into the Glutamine amidotransferase type-1 domain. The active-site Nucleophile is C82. Active-site residues include H169 and E171. Residues 196 to 385 (WEMGDFIHEK…LGVPEEILRR (190 aa)) enclose the GMPS ATP-PPase domain. 223 to 229 (SGGVDST) contributes to the ATP binding site.

Homodimer.

The catalysed reaction is XMP + L-glutamine + ATP + H2O = GMP + L-glutamate + AMP + diphosphate + 2 H(+). It participates in purine metabolism; GMP biosynthesis; GMP from XMP (L-Gln route): step 1/1. In terms of biological role, catalyzes the synthesis of GMP from XMP. The polypeptide is GMP synthase [glutamine-hydrolyzing] (guaA) (Aquifex aeolicus (strain VF5)).